Consider the following 335-residue polypeptide: Acetyl-coenzyme A carboxylase carboxyl transferase subunit alpha (335 aa).

Residues 40-294 enclose the CoA carboxyltransferase C-terminal domain; that stretch reads QLETLAARRR…KEAIEKHLNA (255 aa).

The protein belongs to the AccA family. As to quaternary structure, acetyl-CoA carboxylase is a heterohexamer composed of biotin carboxyl carrier protein (AccB), biotin carboxylase (AccC) and two subunits each of ACCase subunit alpha (AccA) and ACCase subunit beta (AccD).

The protein localises to the cytoplasm. The enzyme catalyses N(6)-carboxybiotinyl-L-lysyl-[protein] + acetyl-CoA = N(6)-biotinyl-L-lysyl-[protein] + malonyl-CoA. The protein operates within lipid metabolism; malonyl-CoA biosynthesis; malonyl-CoA from acetyl-CoA: step 1/1. In terms of biological role, component of the acetyl coenzyme A carboxylase (ACC) complex. First, biotin carboxylase catalyzes the carboxylation of biotin on its carrier protein (BCCP) and then the CO(2) group is transferred by the carboxyltransferase to acetyl-CoA to form malonyl-CoA. The protein is Acetyl-coenzyme A carboxylase carboxyl transferase subunit alpha of Prochlorococcus marinus (strain MIT 9301).